Here is a 464-residue protein sequence, read N- to C-terminus: Uronate isomerase (464 aa).

The protein belongs to the metallo-dependent hydrolases superfamily. Uronate isomerase family.

The catalysed reaction is D-glucuronate = D-fructuronate. It catalyses the reaction aldehydo-D-galacturonate = keto-D-tagaturonate. It functions in the pathway carbohydrate metabolism; pentose and glucuronate interconversion. The sequence is that of Uronate isomerase from Caldicellulosiruptor saccharolyticus (strain ATCC 43494 / DSM 8903 / Tp8T 6331).